The chain runs to 239 residues: UDP-2,3-diacylglucosamine hydrolase (239 aa).

Mn(2+) contacts are provided by Asp8, His10, Asp41, Asn79, and His114. 79 to 80 provides a ligand contact to substrate; that stretch reads NR. Residues Asp122, Ser160, Asn164, Lys167, and His195 each coordinate substrate. 2 residues coordinate Mn(2+): His195 and His197.

The protein belongs to the LpxH family. Mn(2+) is required as a cofactor.

Its subcellular location is the cell inner membrane. The catalysed reaction is UDP-2-N,3-O-bis[(3R)-3-hydroxytetradecanoyl]-alpha-D-glucosamine + H2O = 2-N,3-O-bis[(3R)-3-hydroxytetradecanoyl]-alpha-D-glucosaminyl 1-phosphate + UMP + 2 H(+). The protein operates within glycolipid biosynthesis; lipid IV(A) biosynthesis; lipid IV(A) from (3R)-3-hydroxytetradecanoyl-[acyl-carrier-protein] and UDP-N-acetyl-alpha-D-glucosamine: step 4/6. Functionally, hydrolyzes the pyrophosphate bond of UDP-2,3-diacylglucosamine to yield 2,3-diacylglucosamine 1-phosphate (lipid X) and UMP by catalyzing the attack of water at the alpha-P atom. Involved in the biosynthesis of lipid A, a phosphorylated glycolipid that anchors the lipopolysaccharide to the outer membrane of the cell. In Sodalis glossinidius (strain morsitans), this protein is UDP-2,3-diacylglucosamine hydrolase.